Consider the following 262-residue polypeptide: Protein CUSTOS (262 aa).

Disordered stretches follow at residues 1 to 79 and 126 to 262; these read MAAP…LQTT and FTSV…IPAN. A compositionally biased stretch (low complexity) spans 9–18; that stretch reads SDSESSNSSS. Polar residues predominate over residues 51–61; the sequence is ANSQLSTSQPS. Serine 61 carries the phosphoserine modification. The residue at position 79 (threonine 79) is a Phosphothreonine. Serine 138 is subject to Phosphoserine. Threonine 182 carries the post-translational modification Phosphothreonine. Basic residues predominate over residues 188 to 199; the sequence is KKKRKLKKKAKK. Over residues 200 to 209 the composition is skewed to low complexity; that stretch reads VASVDSAVAA. Polar residues predominate over residues 210–221; sequence TTPTSMATVQKQ. Threonine 211 carries the phosphothreonine modification. A Nucleolar localization signal (NLS) motif is present at residues 236 to 241; sequence KKKKKA.

This sequence belongs to the CUSTOS family.

The protein resides in the nucleus envelope. Plays a role in the regulation of Wnt signaling pathway during early development. The polypeptide is Protein CUSTOS (Homo sapiens (Human)).